A 396-amino-acid polypeptide reads, in one-letter code: DNA polymerase IV (396 aa).

In terms of domain architecture, UmuC spans 6 to 186; sequence IIHVDMDAFY…LPISRLWGVG (181 aa). Residues D10 and D104 each coordinate Mg(2+). E105 is a catalytic residue.

It belongs to the DNA polymerase type-Y family. In terms of assembly, monomer. Mg(2+) serves as cofactor.

The protein localises to the cytoplasm. It carries out the reaction DNA(n) + a 2'-deoxyribonucleoside 5'-triphosphate = DNA(n+1) + diphosphate. In terms of biological role, poorly processive, error-prone DNA polymerase involved in untargeted mutagenesis. Copies undamaged DNA at stalled replication forks, which arise in vivo from mismatched or misaligned primer ends. These misaligned primers can be extended by PolIV. Exhibits no 3'-5' exonuclease (proofreading) activity. May be involved in translesional synthesis, in conjunction with the beta clamp from PolIII. In Desulfatibacillum aliphaticivorans, this protein is DNA polymerase IV.